A 710-amino-acid chain; its full sequence is Polyribonucleotide nucleotidyltransferase (710 aa).

Residues Asp488 and Asp494 each contribute to the Mg(2+) site. A KH domain is found at 555 to 614 (PRIETITIPTDKIRDVIGSGGKVIREIVETTGAKVDVNDDGVIKVSSSDGASIKAALDWI). Residues 624 to 692 (GQIYKGKVVK…DRGKVRLSMK (69 aa)) form the S1 motif domain.

It belongs to the polyribonucleotide nucleotidyltransferase family. Mg(2+) is required as a cofactor.

It is found in the cytoplasm. The catalysed reaction is RNA(n+1) + phosphate = RNA(n) + a ribonucleoside 5'-diphosphate. Functionally, involved in mRNA degradation. Catalyzes the phosphorolysis of single-stranded polyribonucleotides processively in the 3'- to 5'-direction. The polypeptide is Polyribonucleotide nucleotidyltransferase (Maricaulis maris (strain MCS10) (Caulobacter maris)).